The chain runs to 800 residues: Ent-copalyl diphosphate synthase 2, chloroplastic (800 aa).

The N-terminal 47 residues, 1 to 47, are a transit peptide targeting the chloroplast; the sequence is MQMQVLTAASSLPRATLLRPAAAEPWRQSFLQLQARPIQRPGIMLHC. Residues 52 to 80 are disordered; that stretch reads QGQETRERRQLDDDEHARPPQGGDDDVAA. Positions 55–69 are enriched in basic and acidic residues; sequence ETRERRQLDDDEHAR. Lys-242 serves as a coordination point for substrate. Mg(2+) contacts are provided by Asp-374 and Asp-376. A DXDD motif motif is present at residues 374-377; that stretch reads DIDD. Lys-461 is a binding site for substrate.

This sequence belongs to the terpene synthase family. Requires Mg(2+) as cofactor.

Its subcellular location is the plastid. The protein localises to the chloroplast. The catalysed reaction is (2E,6E,10E)-geranylgeranyl diphosphate = ent-copalyl diphosphate. Its pathway is secondary metabolite biosynthesis; terpenoid biosynthesis. In terms of biological role, catalyzes the conversion of geranylgeranyl diphosphate to the phytoalexin precursor ent-copalyl diphosphate. The protein is Ent-copalyl diphosphate synthase 2, chloroplastic of Oryza sativa subsp. japonica (Rice).